Here is a 511-residue protein sequence, read N- to C-terminus: MLSTMDTVAALAAVFVAGTLLSRLASWIRYHFKIRKIPLAHNLGLLDRIFTRKATEEFAVDFKNLSRKGLAKDKNAFRVQTDFGEMVILGGHYAEEMKGDNGLSTGDYTKMELMGDIPGFEPFSFAGDHRELMHTVITKRLNRALPRLAIEQSVEVADFLSHNWTDSNEWHSIPLYQMLMGLVARASVSAFLGPELARNERWIELNAQYTVVGIGAVHALRPWPRFLLPLVHHFHPKAKAVRAILSECRQIMEPILRRRAQAKQGIQIKSAVSDTALDWFEEVAASIGQSYDPTVAQLTFAVAAMHSTTDHLCQILIDLRDKTEVVAAARSELVDVVTREGWNQTALSQLKLMESIMKESQRMKPINRVINKRIVTEDLHLSNDVFLPKGSFVAVSGERMHNPSIYEDPEQYDAYRFIKKAEEGPESARFSGYTSITTDSVGFGYGKHSCPGRSYVSQEMKVILSHILLKYDFRFPEGYQPKGVNNGFDSITDIMASCMIRRRAEEVKLPG.

Residues 7–29 (TVAALAAVFVAGTLLSRLASWIR) traverse the membrane as a helical segment. N-linked (GlcNAc...) asparagine glycans are attached at residues N64, N163, and N343. Residue C450 participates in heme binding.

Belongs to the cytochrome P450 family. Heme serves as cofactor.

Its subcellular location is the membrane. It functions in the pathway mycotoxin biosynthesis. In terms of biological role, cytochrome P450 monooxygenase; part of the 2 gene clusters that mediate the biosynthesis of fusicoccins, diterpene glucosides that display phytohormone-like activity and function as potent activators of plasma membrane H(+)-ATPases in plants by modifying 14-3-3 proteins and cause the plant disease constriction canker. The first step in the pathway is performed by the fusicoccadiene synthase PaFS that possesses both prenyl transferase and terpene cyclase activity, converting isopentenyl diphosphate and dimethylallyl diphosphate into geranylgeranyl diphosphate (GGDP) and successively converting GGDP into fusicocca-2,10(14)-diene, a precursor for fusicoccin H. The second step is the oxidation at the C-8 position by the cytochrome P450 monooxygenase PaP450-2 to yield fusicocca-2,10(14)-diene-8-beta-ol. The cytochrome P450 monooxygenase PaP450-1 then catalyzes the hydroxylation at the C-16 position to produce fusicocca-2,10(14)-diene-8-beta,16-diol. The dioxygenase fc-dox then catalyzes the 16-oxydation of fusicocca-2,10(14)-diene-8-beta,16-diol to yield an aldehyde (8-beta-hydroxyfusicocca-1,10(14)-dien-16-al). The short-chain dehydrogenase/reductase fc-sdr catalyzes the reduction of the aldehyde to yield fusicocca-1,10(14)-diene-8-beta,16-diol. The next step is the hydroxylation at C-9 performed by the cytochrome P450 monooxygenase PaP450-3 that leads to fusicoccin H aglycon which is glycosylated to fusicoccin H by the O-glycosyltransferase PaGT. Hydroxylation at C-12 by the cytochrome P450 monooxygenase PaP450-4 leads then to the production of fusicoccin Q and is followed by methylation by the O-methyltransferase PaMT to yield fusicoccin P. Fusicoccin P is further converted to fusicoccin J via prenylation by the O-glucose prenyltransferase PaPT. Cytochrome P450 monooxygenase PaP450-5 then performs hydroxylation at C-19 to yield dideacetyl-fusicoccin A which is acetylated to 3'-O-deacetyl-fusicoccin A by the O-acetyltransferase PaAT-2. Finally, a another acetylation by the O-acetyltransferase PaAT-1 yields fusicoccin A. The sequence is that of Fusicocca-1,10(14)-diene-8beta,16-diol C-9 hydroxylase from Phomopsis amygdali (Fusicoccum amygdali).